A 322-amino-acid chain; its full sequence is MKKIAVLTSGGDSPGMNAAVRAVVRTAIYNEIEVYGVYHGYQGLLNDDIHKLELGSVGDTIQRGGTFLYSARCPEFKEQEVRKVAIENLRKRGIEGLVVIGGDGSYRGAQRISEECKEIQTIGIPGTIDNDINGTDFTIGFDTALNTIIGLVDKIRDTASSHARTFIIEAMGRDCGDLALWAGLSVGAETIVVPEVKTDIKEIADKIEQGIKRGKKHSIVLVAEGCMTAQDCQKELSQYINVDNRVSVLGHVQRGGSPTGADRVLASRLGGYAVDLLMQGETAKGVGIKNNKIVATSFDEIFDGKDHKFDYSLYELANKLSI.

Residue Gly-11 participates in ATP binding. ADP is bound at residue 21–25 (RAVVR). ATP is bound by residues 72-73 (RC) and 102-105 (GDGS). Residue Asp-103 participates in Mg(2+) binding. 127-129 (TID) serves as a coordination point for substrate. Catalysis depends on Asp-129, which acts as the Proton acceptor. Arg-156 contributes to the ADP binding site. Substrate is bound by residues Arg-164 and 171–173 (MGR). ADP is bound by residues 187–189 (GAE), Arg-213, and 215–217 (KKH). Residues Glu-224, Arg-245, and 251 to 254 (HVQR) each bind substrate.

This sequence belongs to the phosphofructokinase type A (PFKA) family. ATP-dependent PFK group I subfamily. Prokaryotic clade 'B1' sub-subfamily. As to quaternary structure, homotetramer. Mg(2+) is required as a cofactor.

Its subcellular location is the cytoplasm. It catalyses the reaction beta-D-fructose 6-phosphate + ATP = beta-D-fructose 1,6-bisphosphate + ADP + H(+). Its pathway is carbohydrate degradation; glycolysis; D-glyceraldehyde 3-phosphate and glycerone phosphate from D-glucose: step 3/4. Allosterically activated by ADP and other diphosphonucleosides, and allosterically inhibited by phosphoenolpyruvate. In terms of biological role, catalyzes the phosphorylation of D-fructose 6-phosphate to fructose 1,6-bisphosphate by ATP, the first committing step of glycolysis. The chain is ATP-dependent 6-phosphofructokinase from Staphylococcus aureus (strain JH1).